The sequence spans 438 residues: GTPase Obg (438 aa).

In terms of domain architecture, Obg spans 2-160; sequence SMFLDTAKIS…RELELELKIL (159 aa). The segment at 128-147 is disordered; sequence NIRFATPRNPAPEIAENGEP. The 178-residue stretch at 161-338 folds into the OBG-type G domain; the sequence is ADVGLVGFPS…LLDATANLLA (178 aa). GTP-binding positions include 167-174, 192-196, 214-217, 284-287, and 319-321; these read GFPSVGKS, FTTIV, DLPG, NKMD, and STL. Residues serine 174 and threonine 194 each contribute to the Mg(2+) site. Positions 360-438 constitute an OCT domain; the sequence is GFSEEEKAFE…IGNFEFEFVD (79 aa).

It belongs to the TRAFAC class OBG-HflX-like GTPase superfamily. OBG GTPase family. Monomer. Requires Mg(2+) as cofactor.

Its subcellular location is the cytoplasm. Functionally, an essential GTPase which binds GTP, GDP and possibly (p)ppGpp with moderate affinity, with high nucleotide exchange rates and a fairly low GTP hydrolysis rate. Plays a role in control of the cell cycle, stress response, ribosome biogenesis and in those bacteria that undergo differentiation, in morphogenesis control. This chain is GTPase Obg, found in Streptococcus uberis (strain ATCC BAA-854 / 0140J).